The primary structure comprises 124 residues: Ribonuclease pancreatic (124 aa).

The disordered stretch occupies residues 1–24; sequence KESSAMKFQRQHMDSSGSPSTNAN. Substrate is bound by residues lysine 7 and arginine 10. Histidine 12 acts as the Proton acceptor in catalysis. Residues 14–24 are compositionally biased toward polar residues; the sequence is DSSGSPSTNAN. 4 cysteine pairs are disulfide-bonded: cysteine 26–cysteine 84, cysteine 40–cysteine 95, cysteine 58–cysteine 110, and cysteine 65–cysteine 72. An N-linked (GlcNAc...) asparagine glycan is attached at asparagine 34. Residues 41-45, lysine 66, and arginine 85 contribute to the substrate site; that span reads KPVNT. The active-site Proton donor is histidine 119.

Belongs to the pancreatic ribonuclease family. Monomer. Interacts with and forms tight 1:1 complexes with RNH1. Dimerization of two such complexes may occur. Interaction with RNH1 inhibits this protein. As to expression, pancreas.

It is found in the secreted. The enzyme catalyses an [RNA] containing cytidine + H2O = an [RNA]-3'-cytidine-3'-phosphate + a 5'-hydroxy-ribonucleotide-3'-[RNA].. It carries out the reaction an [RNA] containing uridine + H2O = an [RNA]-3'-uridine-3'-phosphate + a 5'-hydroxy-ribonucleotide-3'-[RNA].. Endonuclease that catalyzes the cleavage of RNA on the 3' side of pyrimidine nucleotides. Acts on single-stranded and double-stranded RNA. This chain is Ribonuclease pancreatic (RNASE1), found in Chinchilla chinchilla (Short-tailed chinchilla).